Reading from the N-terminus, the 501-residue chain is Microtubule-associated protein mmb1 (501 aa).

Polar residues-rich tracts occupy residues Asn-61 to Val-95, Arg-103 to Ala-122, and His-132 to Ala-168. 3 disordered regions span residues Asn-61 to Asn-274, Val-328 to Asn-381, and Asn-478 to Ile-501. Positions Ser-234 to Val-252 are enriched in low complexity. Polar residues-rich tracts occupy residues Asn-253–Asn-274, Ser-367–Asn-381, and Asn-478–Leu-495.

The protein localises to the cytoplasm. It is found in the cytoskeleton. In terms of biological role, involved in the cell polarity process and in regulation of microtubule growth. Has a role in meiosis. Involved in microtubule dynamics. Binds to mitochondria and microtubules, attaching the tubular mitochondria to the microtubule lattice at multiple discrete interaction sites. The polypeptide is Microtubule-associated protein mmb1 (Schizosaccharomyces pombe (strain 972 / ATCC 24843) (Fission yeast)).